The primary structure comprises 339 residues: Cullin-associated NEDD8-dissociated protein 1, N-terminal part (339 aa).

2 HEAT repeats span residues 5-42 and 50-87; these read HTIQQNLNGLLSKLNDPDPDMRYMSLNDLYGILSNPCS and ASATRLAEGLLKALDDQHGDVQNQALKCLGPLVARLPL.

In terms of assembly, interacts with candA-C. Interacts with unneddylated cullins culA and culD; interaction occurs only when complexed with candA-C.

The protein resides in the nucleus. Its function is as follows. Assembly factor of SCF (SKP1-CUL1-F-box protein) E3 ubiquitin ligase complexes that promotes the exchange of the substrate-recognition F-box subunit in SCF complexes, thereby playing a key role in the cellular repertoire of SCF complexes. Acts as a F-box protein exchange factor when interacting with candA-C. This Emericella nidulans (strain FGSC A4 / ATCC 38163 / CBS 112.46 / NRRL 194 / M139) (Aspergillus nidulans) protein is Cullin-associated NEDD8-dissociated protein 1, N-terminal part (candA-N).